Here is a 278-residue protein sequence, read N- to C-terminus: HTH-type transcriptional regulator HdfR (278 aa).

In terms of domain architecture, HTH lysR-type spans 1–58 (MDTELLKTFLEVSRTRHFGRAAEALYLTQSAVSFRIRQLENQLGVNLFTRHRNNIRLT). A DNA-binding region (H-T-H motif) is located at residues 18–37 (FGRAAEALYLTQSAVSFRIR).

It belongs to the LysR transcriptional regulatory family.

Negatively regulates the transcription of the flagellar master operon flhDC by binding to the upstream region of the operon. The chain is HTH-type transcriptional regulator HdfR from Salmonella schwarzengrund (strain CVM19633).